Here is a 241-residue protein sequence, read N- to C-terminus: Fatty acid metabolism regulator protein (241 aa).

An HTH gntR-type domain is found at 6–74 (KGPASFAEKY…HGKPTRVNNF (69 aa)). A DNA-binding region (H-T-H motif) is located at residues 34–53 (ERELSELIGVTRTTLREVLQ).

In terms of assembly, homodimer.

Its subcellular location is the cytoplasm. In terms of biological role, multifunctional regulator of fatty acid metabolism. In Shewanella sp. (strain ANA-3), this protein is Fatty acid metabolism regulator protein.